A 341-amino-acid polypeptide reads, in one-letter code: uncharacterized protein (341 aa).

Positions 125-146 (DTVKHNGSGPRPEQASSHVHYS) are disordered.

Belongs to the cycloisomerase 2 family.

This is an uncharacterized protein from Lactococcus lactis subsp. cremoris (strain MG1363).